A 688-amino-acid polypeptide reads, in one-letter code: DNA polymerase III subunit tau/gamma (688 aa).

G45–T52 provides a ligand contact to ATP. 4 residues coordinate Zn(2+): C64, C73, C76, and C79. The disordered stretch occupies residues Q452 to V506. Over residues E470–K481 the composition is skewed to basic and acidic residues. Positions L484–E499 are enriched in polar residues.

It belongs to the DnaX/STICHEL family. In terms of assembly, DNA polymerase III contains a core (composed of alpha, epsilon and theta chains) that associates with a tau subunit. This core dimerizes to form the POLIII' complex. PolIII' associates with the gamma complex (composed of gamma, delta, delta', psi and chi chains) and with the beta chain to form the complete DNA polymerase III complex.

The catalysed reaction is DNA(n) + a 2'-deoxyribonucleoside 5'-triphosphate = DNA(n+1) + diphosphate. Functionally, DNA polymerase III is a complex, multichain enzyme responsible for most of the replicative synthesis in bacteria. This DNA polymerase also exhibits 3' to 5' exonuclease activity. This chain is DNA polymerase III subunit tau/gamma (dnaX), found in Haemophilus influenzae (strain ATCC 51907 / DSM 11121 / KW20 / Rd).